A 173-amino-acid polypeptide reads, in one-letter code: NAD(P)H-quinone oxidoreductase subunit J (173 aa).

It belongs to the complex I 30 kDa subunit family. NDH-1 can be composed of about 15 different subunits; different subcomplexes with different compositions have been identified which probably have different functions.

Its subcellular location is the cellular thylakoid membrane. It carries out the reaction a plastoquinone + NADH + (n+1) H(+)(in) = a plastoquinol + NAD(+) + n H(+)(out). The enzyme catalyses a plastoquinone + NADPH + (n+1) H(+)(in) = a plastoquinol + NADP(+) + n H(+)(out). Functionally, NDH-1 shuttles electrons from an unknown electron donor, via FMN and iron-sulfur (Fe-S) centers, to quinones in the respiratory and/or the photosynthetic chain. The immediate electron acceptor for the enzyme in this species is believed to be plastoquinone. Couples the redox reaction to proton translocation, and thus conserves the redox energy in a proton gradient. Cyanobacterial NDH-1 also plays a role in inorganic carbon-concentration. The protein is NAD(P)H-quinone oxidoreductase subunit J of Prochlorococcus marinus (strain NATL1A).